Here is a 77-residue protein sequence, read N- to C-terminus: Small ribosomal subunit protein uS17 (77 aa).

It belongs to the universal ribosomal protein uS17 family. In terms of assembly, part of the 30S ribosomal subunit.

In terms of biological role, one of the primary rRNA binding proteins, it binds specifically to the 5'-end of 16S ribosomal RNA. The polypeptide is Small ribosomal subunit protein uS17 (Anaplasma marginale (strain St. Maries)).